A 713-amino-acid polypeptide reads, in one-letter code: KNR4/SMI1 homolog (713 aa).

Disordered stretches follow at residues 18-129 (PDRY…VTRD), 255-274 (IFIN…SPVA), 400-457 (RHQM…SKPA), and 500-713 (EPLE…KGKK). Positions 22 to 34 (ASQQRSSKASQSA) are enriched in low complexity. A compositionally biased stretch (polar residues) spans 35 to 65 (GANSQNRPLYNNDDNQSEMYQASSSYTGGYT). Low complexity-rich tracts occupy residues 66–81 (NSPS…GAAA) and 88–103 (SSRN…SSTS). The span at 260 to 270 (NAGSPNSSTPG) shows a compositional bias: polar residues. Positions 400–412 (RHQMQRREHERRQ) are enriched in basic and acidic residues. The span at 413-429 (AAAAAQQQQQQQQHHAQ) shows a compositional bias: low complexity. Composition is skewed to basic and acidic residues over residues 507 to 605 (EIKG…EEQK) and 613 to 662 (AKAE…KIDE). Acidic residues predominate over residues 663-686 (ENGNAEEADEEADDDDEDDEEEGD). Positions 701–713 (SKSKKKNKKKGKK) are enriched in basic residues.

This sequence belongs to the KNR4/SMI1 family.

This Yarrowia lipolytica (strain CLIB 122 / E 150) (Yeast) protein is KNR4/SMI1 homolog.